The chain runs to 225 residues: Ribosome maturation factor RimM (225 aa).

Residues 144–225 (ADEFYWVDLI…RIVVDWEADY (82 aa)) enclose the PRC barrel domain.

This sequence belongs to the RimM family. As to quaternary structure, binds ribosomal protein uS19.

The protein resides in the cytoplasm. Its function is as follows. An accessory protein needed during the final step in the assembly of 30S ribosomal subunit, possibly for assembly of the head region. Essential for efficient processing of 16S rRNA. May be needed both before and after RbfA during the maturation of 16S rRNA. It has affinity for free ribosomal 30S subunits but not for 70S ribosomes. In Burkholderia ambifaria (strain MC40-6), this protein is Ribosome maturation factor RimM.